We begin with the raw amino-acid sequence, 213 residues long: Large ribosomal subunit protein uL1 (213 aa).

Belongs to the universal ribosomal protein uL1 family. Part of the 50S ribosomal subunit.

Binds directly to 23S rRNA. Probably involved in E site tRNA release. In terms of biological role, protein L1 is also a translational repressor protein, it controls the translation of its operon by binding to its mRNA. This Methanosarcina mazei (strain ATCC BAA-159 / DSM 3647 / Goe1 / Go1 / JCM 11833 / OCM 88) (Methanosarcina frisia) protein is Large ribosomal subunit protein uL1.